Reading from the N-terminus, the 85-residue chain is Putative membrane protein insertion efficiency factor (85 aa).

Belongs to the UPF0161 family.

Its subcellular location is the cell inner membrane. Could be involved in insertion of integral membrane proteins into the membrane. In Escherichia coli O6:H1 (strain CFT073 / ATCC 700928 / UPEC), this protein is Putative membrane protein insertion efficiency factor.